We begin with the raw amino-acid sequence, 370 residues long: Peptide chain release factor 2 (370 aa).

At Gln252 the chain carries N5-methylglutamine.

It belongs to the prokaryotic/mitochondrial release factor family. Post-translationally, methylated by PrmC. Methylation increases the termination efficiency of RF2.

It is found in the cytoplasm. In terms of biological role, peptide chain release factor 2 directs the termination of translation in response to the peptide chain termination codons UGA and UAA. The chain is Peptide chain release factor 2 from Mycobacterium avium (strain 104).